The sequence spans 319 residues: Ribosomal RNA small subunit methyltransferase H (319 aa).

S-adenosyl-L-methionine contacts are provided by residues 37–39 (GGH), Asp56, Leu90, Asp104, and Gln111.

The protein belongs to the methyltransferase superfamily. RsmH family.

The protein localises to the cytoplasm. The catalysed reaction is cytidine(1402) in 16S rRNA + S-adenosyl-L-methionine = N(4)-methylcytidine(1402) in 16S rRNA + S-adenosyl-L-homocysteine + H(+). Specifically methylates the N4 position of cytidine in position 1402 (C1402) of 16S rRNA. The sequence is that of Ribosomal RNA small subunit methyltransferase H from Nocardioides sp. (strain ATCC BAA-499 / JS614).